Consider the following 410-residue polypeptide: LL-diaminopimelate aminotransferase (410 aa).

Residues Y15 and G42 each coordinate substrate. Residues Y72, 108–109 (AK), Y132, N187, Y218, and 246–248 (SFS) each bind pyridoxal 5'-phosphate. Substrate-binding residues include K109, Y132, and N187. K249 bears the N6-(pyridoxal phosphate)lysine mark. 2 residues coordinate pyridoxal 5'-phosphate: R257 and N292. Positions 292 and 388 each coordinate substrate.

Belongs to the class-I pyridoxal-phosphate-dependent aminotransferase family. LL-diaminopimelate aminotransferase subfamily. As to quaternary structure, homodimer. Pyridoxal 5'-phosphate is required as a cofactor.

The enzyme catalyses (2S,6S)-2,6-diaminopimelate + 2-oxoglutarate = (S)-2,3,4,5-tetrahydrodipicolinate + L-glutamate + H2O + H(+). It participates in amino-acid biosynthesis; L-lysine biosynthesis via DAP pathway; LL-2,6-diaminopimelate from (S)-tetrahydrodipicolinate (aminotransferase route): step 1/1. In terms of biological role, involved in the synthesis of meso-diaminopimelate (m-DAP or DL-DAP), required for both lysine and peptidoglycan biosynthesis. Catalyzes the direct conversion of tetrahydrodipicolinate to LL-diaminopimelate. Can also use m-DAP instead of LL-DAP as the amino-group donor. The protein is LL-diaminopimelate aminotransferase of Acetivibrio thermocellus (strain ATCC 27405 / DSM 1237 / JCM 9322 / NBRC 103400 / NCIMB 10682 / NRRL B-4536 / VPI 7372) (Clostridium thermocellum).